The sequence spans 155 residues: 6,7-dimethyl-8-ribityllumazine synthase (155 aa).

5-amino-6-(D-ribitylamino)uracil is bound by residues phenylalanine 22, 56-58 (AFE), and 80-82 (AVI). 85-86 (NT) is a (2S)-2-hydroxy-3-oxobutyl phosphate binding site. The Proton donor role is filled by histidine 88. A 5-amino-6-(D-ribitylamino)uracil-binding site is contributed by phenylalanine 113. Arginine 127 is a (2S)-2-hydroxy-3-oxobutyl phosphate binding site.

The protein belongs to the DMRL synthase family.

It carries out the reaction (2S)-2-hydroxy-3-oxobutyl phosphate + 5-amino-6-(D-ribitylamino)uracil = 6,7-dimethyl-8-(1-D-ribityl)lumazine + phosphate + 2 H2O + H(+). It functions in the pathway cofactor biosynthesis; riboflavin biosynthesis; riboflavin from 2-hydroxy-3-oxobutyl phosphate and 5-amino-6-(D-ribitylamino)uracil: step 1/2. Its function is as follows. Catalyzes the formation of 6,7-dimethyl-8-ribityllumazine by condensation of 5-amino-6-(D-ribitylamino)uracil with 3,4-dihydroxy-2-butanone 4-phosphate. This is the penultimate step in the biosynthesis of riboflavin. The polypeptide is 6,7-dimethyl-8-ribityllumazine synthase (Streptococcus pneumoniae serotype 2 (strain D39 / NCTC 7466)).